A 345-amino-acid polypeptide reads, in one-letter code: Phosphoribosylformylglycinamidine cyclo-ligase (345 aa).

This sequence belongs to the AIR synthase family.

The protein localises to the cytoplasm. The catalysed reaction is 2-formamido-N(1)-(5-O-phospho-beta-D-ribosyl)acetamidine + ATP = 5-amino-1-(5-phospho-beta-D-ribosyl)imidazole + ADP + phosphate + H(+). Its pathway is purine metabolism; IMP biosynthesis via de novo pathway; 5-amino-1-(5-phospho-D-ribosyl)imidazole from N(2)-formyl-N(1)-(5-phospho-D-ribosyl)glycinamide: step 2/2. The chain is Phosphoribosylformylglycinamidine cyclo-ligase from Methanopyrus kandleri (strain AV19 / DSM 6324 / JCM 9639 / NBRC 100938).